A 430-amino-acid polypeptide reads, in one-letter code: Probable acetate kinase (430 aa).

Mg(2+) is bound at residue Asn12. Position 19 (Lys19) interacts with ATP. Position 100 (Arg100) interacts with substrate. Asp159 serves as the catalytic Proton donor/acceptor. Residue His220–Gly224 participates in ATP binding. Glu416 provides a ligand contact to Mg(2+).

It belongs to the acetokinase family. The cofactor is Mg(2+).

The enzyme catalyses acetate + ATP = acetyl phosphate + ADP. It participates in metabolic intermediate biosynthesis; acetyl-CoA biosynthesis; acetyl-CoA from acetate: step 1/2. This Cryptococcus neoformans var. neoformans serotype D (strain B-3501A) (Filobasidiella neoformans) protein is Probable acetate kinase.